A 139-amino-acid polypeptide reads, in one-letter code: Thioredoxin-like protein Clot (139 aa).

A Thioredoxin domain is found at 1–136 (MTVEKVDATV…LADKVDAVVN (136 aa)). Active-site nucleophile residues include Cys49 and Cys52. Cys49 and Cys52 are oxidised to a cystine.

Belongs to the thioredoxin family.

Its function is as follows. Probable thiol-disulfide oxidoreductase that may participate in various redox reactions. In Oryza sativa subsp. japonica (Rice), this protein is Thioredoxin-like protein Clot.